The following is a 53-amino-acid chain: UPF0391 membrane protein TM1040_2720 (53 aa).

The next 2 helical transmembrane spans lie at 4–24 and 29–48; these read WALA…GGIA and GIAQ…ALIL.

It belongs to the UPF0391 family.

It localises to the cell membrane. The protein is UPF0391 membrane protein TM1040_2720 of Ruegeria sp. (strain TM1040) (Silicibacter sp.).